The primary structure comprises 712 residues: MTTQITYFATAARGFEEMLKTELEQICQAECKVAQGGVHFTTTQRGAYQALLHSRLASRILLPLVTTKIFSDLDLYATIVGINWAEIFDPRDTFFVDFNGTNREIRNTQFGAMRVKDGVVDYFERKGFARPTVDKDHADIRIHVYLDRENMVVSLDLSGDALHMRGYREDTGKAPLRETLAAAIVLRSGWQKGTPLVDPMCGSGTLLIEAAQMQAGIAPQLHRKHWGFNAWKGHQQAVWKEVLEQAYLQQNEEIQPLFFGFDLDHRVLAKAKQNAKNAGVAHLIQWQQGDIAALKNPCPNQVGTVICNPPYGERLGTTPALIALYSVFGQRLKQQFSGWNASIFSGEPELLNCLRLRSHRQFKAKNGPLDCLQKNYQISERTAAEQQADELKFEQNAQVAPDFANRLAKNIKKIEKWAKQQGINAYRLYDADLPEYNLAVDRYDDHIVVQEYAAPKNIDEQKARQRLLDAVSATLYVTGVETNKLVLKVRQKQKGTNQYEKLANKGDYFYVTEYGAKLWVNLTDYLDTGLFLDHRLTRKMVGQMAKGKTFLNLFAYTGSATIHAALNGAKSTTTVDMSNTYLNWAEQNLELNNLPLRNNRLFQADCLQWLAECRERFELIFVDPPTFSNSKRMEDSWDVQRDHIKLMTQLKRILTTDGTIVFSNNKRGFKMDFEGLAELGLQAENISHKTLPLDFERNPQIHNCWIIRHIEN.

The THUMP domain occupies 46–157 (GAYQALLHSR…RENMVVSLDL (112 aa)).

Belongs to the methyltransferase superfamily. RlmKL family.

It is found in the cytoplasm. The enzyme catalyses guanosine(2445) in 23S rRNA + S-adenosyl-L-methionine = N(2)-methylguanosine(2445) in 23S rRNA + S-adenosyl-L-homocysteine + H(+). It catalyses the reaction guanosine(2069) in 23S rRNA + S-adenosyl-L-methionine = N(2)-methylguanosine(2069) in 23S rRNA + S-adenosyl-L-homocysteine + H(+). Its function is as follows. Specifically methylates the guanine in position 2445 (m2G2445) and the guanine in position 2069 (m7G2069) of 23S rRNA. The protein is Ribosomal RNA large subunit methyltransferase K/L of Actinobacillus pleuropneumoniae serotype 3 (strain JL03).